A 95-amino-acid polypeptide reads, in one-letter code: Small ribosomal subunit protein bS18 (95 aa).

This sequence belongs to the bacterial ribosomal protein bS18 family. In terms of assembly, part of the 30S ribosomal subunit. Forms a tight heterodimer with protein bS6.

Functionally, binds as a heterodimer with protein bS6 to the central domain of the 16S rRNA, where it helps stabilize the platform of the 30S subunit. The polypeptide is Small ribosomal subunit protein bS18 (Rickettsia africae (strain ESF-5)).